The chain runs to 530 residues: 2,3-bisphosphoglycerate-independent phosphoglycerate mutase (530 aa).

2 residues coordinate Mn(2+): D15 and S65. Catalysis depends on S65, which acts as the Phosphoserine intermediate. Residues H126, R155–D156, R187, R193, R257–R260, and K330 each bind substrate. Residues D397, H401, D438, H439, and H456 each coordinate Mn(2+).

This sequence belongs to the BPG-independent phosphoglycerate mutase family. Monomer. Mn(2+) is required as a cofactor.

It carries out the reaction (2R)-2-phosphoglycerate = (2R)-3-phosphoglycerate. It functions in the pathway carbohydrate degradation; glycolysis; pyruvate from D-glyceraldehyde 3-phosphate: step 3/5. Catalyzes the interconversion of 2-phosphoglycerate and 3-phosphoglycerate. This chain is 2,3-bisphosphoglycerate-independent phosphoglycerate mutase, found in Synechococcus sp. (strain JA-2-3B'a(2-13)) (Cyanobacteria bacterium Yellowstone B-Prime).